The primary structure comprises 155 residues: Protein-export protein SecB (155 aa).

This sequence belongs to the SecB family. Homotetramer, a dimer of dimers. One homotetramer interacts with 1 SecA dimer.

The protein resides in the cytoplasm. Its function is as follows. One of the proteins required for the normal export of preproteins out of the cell cytoplasm. It is a molecular chaperone that binds to a subset of precursor proteins, maintaining them in a translocation-competent state. It also specifically binds to its receptor SecA. This is Protein-export protein SecB from Vibrio atlanticus (strain LGP32) (Vibrio splendidus (strain Mel32)).